The sequence spans 360 residues: Protein phosphatase 1 regulatory subunit 7 (360 aa).

The tract at residues 1–64 is disordered; the sequence is MAAERGAGQQ…GEEDPEEEHE (64 aa). Alanine 2 is subject to N-acetylalanine. Phosphoserine occurs at positions 12, 24, 27, 44, and 47. The span at 17-34 shows a compositional bias: basic and acidic residues; that stretch reads EVDRRVESEESGDEEGKK. Over residues 53 to 63 the composition is skewed to acidic residues; that stretch reads ERGEEDPEEEH. LRR repeat units follow at residues 77 to 98, 99 to 120, 121 to 142, 143 to 164, 165 to 186, 187 to 208, 209 to 230, 231 to 252, 253 to 274, 275 to 296, and 297 to 318; these read DAED…EVLK, KVKT…EELQ, SLRE…EALT, ELEI…DKVT, QLKK…SNLH, QLQM…DTLT, NLES…DALT, NLTV…QNLV, NLQE…ENNN, KLTM…SHLT, and EPQE…DELK. Residue serine 322 is modified to Phosphoserine. The LRRCT domain occupies 331–360; it reads NPLQKDPQYRRKVMLALPSVRQIDATFVRF.

The protein belongs to the SDS22 family. In terms of assembly, interacts with PPP1CA, PPP1CB and PPP1CC/PPP1G.

Its subcellular location is the nucleus. Functionally, regulatory subunit of protein phosphatase 1. The sequence is that of Protein phosphatase 1 regulatory subunit 7 (PPP1R7) from Pongo abelii (Sumatran orangutan).